A 434-amino-acid chain; its full sequence is KH domain-containing protein 3 (434 aa).

The segment at 1-39 (MATLKTFRTLVQLKHKLGKAYEIVGEPRLPKWFHVEYLE) is involved in RNA binding. Residues 40-118 (DPKKMYVEPT…CRMKLMEKEA (79 aa)) form the KH; atypical domain. Phosphothreonine is present on residues threonine 267 and threonine 279. A required for interaction with NUMA1 and regulation of apoptosis in response to DNA damage region spans residues 334–434 (VREAATQQTP…RAVWEPFVML (101 aa)).

The protein belongs to the KHDC1 family. As to quaternary structure, component of the subcortical maternal complex (SCMC), at least composed of NLRP5, KHDC3, OOEP, and TLE6. Within the complex, interacts with NLRP5, KHDC3 and TLE6. The SCMC may facilitate translocation of its components between the nuclear and cytoplasmic compartments. Forms a scaffold complex with OOEP/FLOPED, and interacts with BLM and TRIM25 at DNA replication forks. Interacts with PARP1; the interaction is increased following the formation of DNA double-strand breaks. Interacts (via C-terminus) with NUMA1.

It is found in the cytoplasm. The protein resides in the cell cortex. The protein localises to the nucleus. Its subcellular location is the mitochondrion. It localises to the cytoskeleton. It is found in the microtubule organizing center. The protein resides in the centrosome. The protein localises to the chromosome. Its function is as follows. Component of the subcortical maternal complex (SCMC), a multiprotein complex that plays a key role in early embryonic development. The SCMC complex is a structural constituent of cytoplasmic lattices, which consist in fibrous structures found in the cytoplasm of oocytes and preimplantation embryos. They are required to store maternal proteins critical for embryonic development, such as proteins that control epigenetic reprogramming of the preimplantation embryo, and prevent their degradation or activation. KHDC3 ensures proper spindle assembly by regulating the localization of AURKA via RHOA signaling and of PLK1 via a RHOA-independent process. Required for the localization of MAD2L1 to kinetochores to enable spindle assembly checkpoint function. As part of the OOEP-KHDC3 scaffold, recruits BLM and TRIM25 to DNA replication forks, thereby promoting the ubiquitination of BLM by TRIM25, enhancing BLM retainment at replication forks and therefore promoting stalled replication fork restart. Regulates homologous recombination-mediated DNA repair via recruitment of RAD51 to sites of DNA double-strand breaks, and sustainment of PARP1 activity, which in turn modulates downstream ATM or ATR activation. Activation of ATM or ATR in response to DNA double-strand breaks may be cell-type specific. Its role in DNA double-strand break repair is independent of its role in restarting stalled replication forks. Promotes neural stem cell neurogenesis and neuronal differentiation in the hippocampus. May regulate normal development of learning, memory and anxiety. Capable of binding RNA. The protein is KH domain-containing protein 3 of Rattus norvegicus (Rat).